A 116-amino-acid chain; its full sequence is Non-specific lipid-transfer protein 8 (116 aa).

A signal peptide spans Met-1–Ser-24. 4 disulfides stabilise this stretch: Cys-28–Cys-76, Cys-38–Cys-53, Cys-54–Cys-98, and Cys-74–Cys-112.

It belongs to the plant LTP family.

Its function is as follows. Plant non-specific lipid-transfer proteins transfer phospholipids as well as galactolipids across membranes. May play a role in wax or cutin deposition in the cell walls of expanding epidermal cells and certain secretory tissues. The polypeptide is Non-specific lipid-transfer protein 8 (LTP8) (Arabidopsis thaliana (Mouse-ear cress)).